The chain runs to 159 residues: Probable inactive acireductone dioxygenase 2 (159 aa).

Belongs to the acireductone dioxygenase (ARD) family.

It localises to the cytoplasm. The protein resides in the nucleus. Functionally, probable inactive acireductone dioxygenase. In Caenorhabditis briggsae, this protein is Probable inactive acireductone dioxygenase 2.